Here is a 147-residue protein sequence, read N- to C-terminus: Small ribosomal subunit protein uS5 (147 aa).

An S5 DRBM domain is found at 9-72 (FEEVVVNISR…DNAFKNITTV (64 aa)).

Belongs to the universal ribosomal protein uS5 family. In terms of assembly, part of the 30S ribosomal subunit. Contacts proteins S4 and S8.

Its function is as follows. With S4 and S12 plays an important role in translational accuracy. Functionally, located at the back of the 30S subunit body where it stabilizes the conformation of the head with respect to the body. The sequence is that of Small ribosomal subunit protein uS5 from Nitratiruptor sp. (strain SB155-2).